The sequence spans 337 residues: Tryptophan--tRNA ligase (337 aa).

ATP-binding positions include 11-13 (QPT) and 19-20 (GN). The short motif at 12–20 (PTGALHLGN) is the 'HIGH' region element. Residue Asp-135 coordinates L-tryptophan. Residues 147 to 149 (GED), Val-191, and 200 to 204 (KMSKS) contribute to the ATP site. The short motif at 200-204 (KMSKS) is the 'KMSKS' region element.

This sequence belongs to the class-I aminoacyl-tRNA synthetase family. As to quaternary structure, homodimer.

Its subcellular location is the cytoplasm. The enzyme catalyses tRNA(Trp) + L-tryptophan + ATP = L-tryptophyl-tRNA(Trp) + AMP + diphosphate + H(+). Catalyzes the attachment of tryptophan to tRNA(Trp). This chain is Tryptophan--tRNA ligase, found in Parasynechococcus marenigrum (strain WH8102).